The following is a 395-amino-acid chain: MAPVPVSVSATLAPPPAAPPKTTSRSWERRAPADAAFAAASSVAGSAALLTLTPAAPAAALSKEDVAGSLTKAVDTVSQAIDVGGKAAEQVAAVLKALGEAVKPALPVLKSASDEALKLAAPVVSAASKQATEALQGAGVDPAPVLSVAKTAAEQSTKVIDAAKPVASAAVETITSLGPEDYVVAAGXAFLAYLLVPPVWSLVSSSLRGYKGDLTPAQALDKVTTQGYVLIDVRSEKDKAKAGLPQLPSNAKNKLVSVPLEDLPSKLKGMVRNAKKAEAEIAALKISYLKKIGKGSNVIIMDSYSDVAKTVAKTLDSVGFKNCWVMAGGFSGRKGWAQSRLGTDSYNLSVVEVVTPSRVIPAVAGRRTGTTAARIGTASSASRATTRKLLPGGVD.

Residues 1–12 are compositionally biased toward low complexity; sequence MAPVPVSVSATL. Residues 1–27 form a disordered region; the sequence is MAPVPVSVSATLAPPPAAPPKTTSRSW. Residues 1-39 constitute a chloroplast transit peptide; sequence MAPVPVSVSATLAPPPAAPPKTTSRSWERRAPADAAFAA. Residues 40–182 are Lumenal, thylakoid-facing; the sequence is ASSVAGSAAL…TITSLGPEDY (143 aa). Residues 183-203 traverse the membrane as a helical segment; sequence VVAAGXAFLAYLLVPPVWSLV. At 204-395 the chain is on the stromal side; that stretch reads SSSLRGYKGD…TRKLLPGGVD (192 aa). One can recognise a Rhodanese domain in the interval 224 to 345; the sequence is TTQGYVLIDV…WAQSRLGTDS (122 aa). T377 carries the post-translational modification Phosphothreonine.

Phosphorylated in both bundle sheath and mesophyll cells, under both low and high light regimes (70 vs 900 umol photons/m-2/s).

The protein localises to the plastid. It localises to the chloroplast thylakoid membrane. Its function is as follows. Modulates cytoplasmic Ca(2+) concentration and is crucial for proper stomatal regulation in response to elevated levels of external Ca(2+). May function by regulating concentrations of inositol 1,4,5-trisphosphate (IP3), which in turn triggers release of Ca(2+) from internal stores. May play a role in de-etiolation. This Zea mays (Maize) protein is Calcium sensing receptor, chloroplastic.